The chain runs to 175 residues: Large ribosomal subunit protein uL6 (175 aa).

Belongs to the universal ribosomal protein uL6 family. In terms of assembly, part of the 50S ribosomal subunit.

In terms of biological role, this protein binds to the 23S rRNA, and is important in its secondary structure. It is located near the subunit interface in the base of the L7/L12 stalk, and near the tRNA binding site of the peptidyltransferase center. The sequence is that of Large ribosomal subunit protein uL6 from Xylella fastidiosa (strain M23).